A 409-amino-acid chain; its full sequence is DNA primase DnaG (409 aa).

The Toprim domain occupies 175–261; that stretch reads DAIIVVEGRA…EVEELTRKEI (87 aa). 3 residues coordinate Mg(2+): Glu181, Asp223, and Asp225. Over residues 280-289 the composition is skewed to basic and acidic residues; the sequence is ERPKDKEREK. A disordered region spans residues 280–322; sequence ERPKDKEREKGKKPKPKKRPERRGRPRKKKARPKRGPQERRLL. A compositionally biased stretch (basic residues) spans 290–314; sequence GKKPKPKKRPERRGRPRKKKARPKR.

It belongs to the archaeal DnaG primase family. In terms of assembly, forms a ternary complex with MCM helicase and DNA. Component of the archaeal exosome complex. Mg(2+) is required as a cofactor.

It catalyses the reaction ssDNA + n NTP = ssDNA/pppN(pN)n-1 hybrid + (n-1) diphosphate.. Functionally, RNA polymerase that catalyzes the synthesis of short RNA molecules used as primers for DNA polymerase during DNA replication. Also part of the exosome, which is a complex involved in RNA degradation. Acts as a poly(A)-binding protein that enhances the interaction between heteromeric, adenine-rich transcripts and the exosome. The sequence is that of DNA primase DnaG from Methanopyrus kandleri (strain AV19 / DSM 6324 / JCM 9639 / NBRC 100938).